The chain runs to 146 residues: Hemoglobin subunit beta (146 aa).

The residue at position 1 (V1) is an N-acetylvaline. Residues D2–H146 enclose the Globin domain. Residue S44 is modified to Phosphoserine. The residue at position 59 (K59) is an N6-acetyllysine. H63 contacts heme b. Position 82 is an N6-acetyllysine (K82). Heme b is bound at residue H92. Position 93 is an S-nitrosocysteine (C93). Position 144 is an N6-acetyllysine (K144).

The protein belongs to the globin family. As to quaternary structure, heterotetramer of two alpha chains and two beta chains. In terms of tissue distribution, red blood cells.

Its function is as follows. Involved in oxygen transport from the lung to the various peripheral tissues. This is Hemoglobin subunit beta (HBB) from Rhinoceros unicornis (Greater Indian rhinoceros).